We begin with the raw amino-acid sequence, 354 residues long: Uroporphyrinogen decarboxylase (354 aa).

Substrate-binding positions include 35–39 (RQAGR), D84, Y159, S214, and H333.

It belongs to the uroporphyrinogen decarboxylase family. As to quaternary structure, homodimer.

It localises to the cytoplasm. The enzyme catalyses uroporphyrinogen III + 4 H(+) = coproporphyrinogen III + 4 CO2. It functions in the pathway porphyrin-containing compound metabolism; protoporphyrin-IX biosynthesis; coproporphyrinogen-III from 5-aminolevulinate: step 4/4. In terms of biological role, catalyzes the decarboxylation of four acetate groups of uroporphyrinogen-III to yield coproporphyrinogen-III. This is Uroporphyrinogen decarboxylase from Nocardia farcinica (strain IFM 10152).